The primary structure comprises 62 residues: Large ribosomal subunit protein uL29 (62 aa).

This sequence belongs to the universal ribosomal protein uL29 family.

The sequence is that of Large ribosomal subunit protein uL29 from Syntrophotalea carbinolica (strain DSM 2380 / NBRC 103641 / GraBd1) (Pelobacter carbinolicus).